Here is a 413-residue protein sequence, read N- to C-terminus: MKTYLVGGSVRDEILGLPVTDHDYVVVGVSPEEMVHLGFRPVGKDFPVFLHPQSQEQYALARTERKVSRGYKGFEVYASPEVTLQEDLARRDLTINAIAKDEYGNIIDPFGGIADLEAGVLRHIGPAFTEDPVRVLRTARFAARFGFHIAPETLALMNEMVHNGEVDALVSERVWQEIARGLMERHPSRMFYALRDCGALTRIMPEVDALFGVPQPPQHHPEIDTGVHVMMVIDYAASRNYSLQVRFAALTHDLGKGTTPPEEWPRHIGHEARSVRLVQGLCERINPPNEMRNLALLVARYHGDVHRAAELRPVTIANLLQGVDAYRKPERFEEFLQACACDFHGRPGYATRPYPQADRLREAFQAARSVDAGAIAKEMARNVSDPSRLPVAINTRVSETRIAEIRNRLGSLA.

ATP is bound by residues G8 and R11. CTP contacts are provided by G8 and R11. Mg(2+)-binding residues include D21 and D23. 3 residues coordinate ATP: R91, R137, and R140. Residues R91, R137, and R140 each coordinate CTP. Residues 225-326 (TGVHVMMVID…ANLLQGVDAY (102 aa)) form the HD domain.

Belongs to the tRNA nucleotidyltransferase/poly(A) polymerase family. Bacterial CCA-adding enzyme type 1 subfamily. As to quaternary structure, monomer. Can also form homodimers and oligomers. The cofactor is Mg(2+). Ni(2+) is required as a cofactor.

The enzyme catalyses a tRNA precursor + 2 CTP + ATP = a tRNA with a 3' CCA end + 3 diphosphate. It catalyses the reaction a tRNA with a 3' CCA end + 2 CTP + ATP = a tRNA with a 3' CCACCA end + 3 diphosphate. Functionally, catalyzes the addition and repair of the essential 3'-terminal CCA sequence in tRNAs without using a nucleic acid template. Adds these three nucleotides in the order of C, C, and A to the tRNA nucleotide-73, using CTP and ATP as substrates and producing inorganic pyrophosphate. tRNA 3'-terminal CCA addition is required both for tRNA processing and repair. Also involved in tRNA surveillance by mediating tandem CCA addition to generate a CCACCA at the 3' terminus of unstable tRNAs. While stable tRNAs receive only 3'-terminal CCA, unstable tRNAs are marked with CCACCA and rapidly degraded. This chain is Multifunctional CCA protein, found in Nitrosospira multiformis (strain ATCC 25196 / NCIMB 11849 / C 71).